The primary structure comprises 112 residues: ATP synthase epsilon chain (112 aa).

The protein belongs to the ATPase epsilon chain family. As to quaternary structure, F-type ATPases have 2 components, CF(1) - the catalytic core - and CF(0) - the membrane proton channel. CF(1) has five subunits: alpha(3), beta(3), gamma(1), delta(1), epsilon(1). CF(0) has three main subunits: a, b and c.

It is found in the cell inner membrane. Produces ATP from ADP in the presence of a proton gradient across the membrane. The polypeptide is ATP synthase epsilon chain (Rickettsia felis (strain ATCC VR-1525 / URRWXCal2) (Rickettsia azadi)).